A 220-amino-acid polypeptide reads, in one-letter code: Endonuclease NucS (220 aa).

It belongs to the NucS endonuclease family.

The protein resides in the cytoplasm. Cleaves both 3' and 5' ssDNA extremities of branched DNA structures. The protein is Endonuclease NucS of Mycobacterium leprae (strain TN).